Consider the following 396-residue polypeptide: UPF0046 protein T07D4.2 (396 aa).

The segment at 73 to 94 is disordered; sequence SRRGSIASGIPMDKKTRRKLSN.

It belongs to the UPF0046 family.

In Caenorhabditis elegans, this protein is UPF0046 protein T07D4.2.